The primary structure comprises 261 residues: Pantothenate synthetase (261 aa).

An ATP-binding site is contributed by 29 to 36; sequence MGALHNGH. His36 (proton donor) is an active-site residue. Gln60 is a binding site for (R)-pantoate. Position 60 (Gln60) interacts with beta-alanine. 147-150 contributes to the ATP binding site; that stretch reads GEKD. Gln153 lines the (R)-pantoate pocket. 184–187 provides a ligand contact to ATP; sequence LSSR.

This sequence belongs to the pantothenate synthetase family. As to quaternary structure, homodimer.

It localises to the cytoplasm. It catalyses the reaction (R)-pantoate + beta-alanine + ATP = (R)-pantothenate + AMP + diphosphate + H(+). Its pathway is cofactor biosynthesis; (R)-pantothenate biosynthesis; (R)-pantothenate from (R)-pantoate and beta-alanine: step 1/1. Functionally, catalyzes the condensation of pantoate with beta-alanine in an ATP-dependent reaction via a pantoyl-adenylate intermediate. This chain is Pantothenate synthetase, found in Francisella tularensis subsp. tularensis (strain FSC 198).